We begin with the raw amino-acid sequence, 287 residues long: Probable aquaporin PIP1-4 (287 aa).

Met-1 carries the N-acetylmethionine modification. Residues 1–36 are disordered; it reads MEGKEEDVRVGANKFPERQPIGTSAQSTDKDYKEPP. Residues 1 to 55 lie on the Cytoplasmic side of the membrane; it reads MEGKEEDVRVGANKFPERQPIGTSAQSTDKDYKEPPPAPLFEPGELSSWSFYRAG. A helical membrane pass occupies residues 56–76; sequence IAEFIATFLFLYITVLTVMGV. Topologically, residues 77–92 are extracellular; it reads KRAPNMCASVGIQGIA. The chain crosses the membrane as a helical span at residues 93–113; that stretch reads WAFGGMIFALVYCTAGISGGH. The Cytoplasmic portion of the chain corresponds to 114-133; the sequence is INPAVTFGLFLARKLSLTRA. Positions 115–117 match the NPA 1 motif; that stretch reads NPA. The helical transmembrane segment at 134–154 threads the bilayer; that stretch reads VFYMIMQCLGAICGAGVVKGF. Residues 155-175 are Extracellular-facing; it reads QPTPYQTLGGGANTVAHGYTK. Residues 176-196 traverse the membrane as a helical segment; sequence GSGLGAEIIGTFVLVYTVFSA. Residues 197 to 209 are Cytoplasmic-facing; that stretch reads TDAKRSARDSHVP. A helical membrane pass occupies residues 210 to 230; it reads ILAPLPIGFAVFLVHLATIPI. The Extracellular segment spans residues 231-257; the sequence is TGTGINPARSLGAAIIYNKDHSWDDHW. Residues 236–238 carry the NPA 2 motif; that stretch reads NPA. Residues 258–278 traverse the membrane as a helical segment; the sequence is IFWVGPFIGAALAALYHQIVI. Over 279–287 the chain is Cytoplasmic; it reads RAIPFKSKS. At Ser-285 the chain carries Phosphoserine.

It belongs to the MIP/aquaporin (TC 1.A.8) family. PIP (TC 1.A.8.11) subfamily. As to expression, predominantly expressed in roots and green siliques. Also expressed above ground and in flower buds.

It localises to the cell membrane. In terms of biological role, aquaporins facilitate the transport of water and small neutral solutes across cell membranes. This is Probable aquaporin PIP1-4 (PIP1.4) from Arabidopsis thaliana (Mouse-ear cress).